The primary structure comprises 152 residues: Ribosome maturation factor RimP (152 aa).

This sequence belongs to the RimP family.

The protein localises to the cytoplasm. Its function is as follows. Required for maturation of 30S ribosomal subunits. This Idiomarina loihiensis (strain ATCC BAA-735 / DSM 15497 / L2-TR) protein is Ribosome maturation factor RimP.